The sequence spans 317 residues: Sulfate adenylyltransferase subunit 2 (317 aa).

Disordered stretches follow at residues 1–21 (MPDSRPDTELSNPQSAKAPLD) and 298–317 (RAIDRDQSGSMEKKKREGYF).

Belongs to the PAPS reductase family. CysD subfamily. As to quaternary structure, heterodimer composed of CysD, the smaller subunit, and CysN.

The catalysed reaction is sulfate + ATP + H(+) = adenosine 5'-phosphosulfate + diphosphate. The protein operates within sulfur metabolism; hydrogen sulfide biosynthesis; sulfite from sulfate: step 1/3. Its function is as follows. With CysN forms the ATP sulfurylase (ATPS) that catalyzes the adenylation of sulfate producing adenosine 5'-phosphosulfate (APS) and diphosphate, the first enzymatic step in sulfur assimilation pathway. APS synthesis involves the formation of a high-energy phosphoric-sulfuric acid anhydride bond driven by GTP hydrolysis by CysN coupled to ATP hydrolysis by CysD. The protein is Sulfate adenylyltransferase subunit 2 of Rhizobium etli (strain CIAT 652).